Here is a 218-residue protein sequence, read N- to C-terminus: Protein N-lysine methyltransferase METTL21A (218 aa).

S-adenosyl-L-methionine contacts are provided by residues tryptophan 47, 73 to 75 (GAG), aspartate 94, tryptophan 125, and alanine 143.

Belongs to the methyltransferase superfamily. METTL21 family.

Its subcellular location is the cytoplasm. It carries out the reaction L-lysyl-[protein] + 3 S-adenosyl-L-methionine = N(6),N(6),N(6)-trimethyl-L-lysyl-[protein] + 3 S-adenosyl-L-homocysteine + 3 H(+). Functionally, protein-lysine methyltransferase that selectively trimethylates residues in heat shock protein 70 (HSP70) family members. The chain is Protein N-lysine methyltransferase METTL21A (mettl21a) from Danio rerio (Zebrafish).